The primary structure comprises 163 residues: Protein-export protein SecB (163 aa).

The protein belongs to the SecB family. In terms of assembly, homotetramer, a dimer of dimers. One homotetramer interacts with 1 SecA dimer.

It is found in the cytoplasm. Its function is as follows. One of the proteins required for the normal export of preproteins out of the cell cytoplasm. It is a molecular chaperone that binds to a subset of precursor proteins, maintaining them in a translocation-competent state. It also specifically binds to its receptor SecA. In Methylibium petroleiphilum (strain ATCC BAA-1232 / LMG 22953 / PM1), this protein is Protein-export protein SecB.